The chain runs to 457 residues: uncharacterized protein (457 aa).

Lys75 is subject to N6-(pyridoxal phosphate)lysine.

Pyridoxal 5'-phosphate is required as a cofactor.

This is an uncharacterized protein from Sinorhizobium fredii (strain NBRC 101917 / NGR234).